We begin with the raw amino-acid sequence, 146 residues long: Hemoglobin subunit beta (146 aa).

V1 carries the post-translational modification N-acetylvaline. Residues 2 to 146 (HLTAEEKSAV…VANALAHKYH (145 aa)) form the Globin domain. T12 carries the phosphothreonine modification. At S44 the chain carries Phosphoserine. K59 carries the post-translational modification N6-acetyllysine. H63 serves as a coordination point for heme b. An N6-acetyllysine modification is found at K82. Position 92 (H92) interacts with heme b. An S-nitrosocysteine modification is found at C93. At K144 the chain carries N6-acetyllysine.

The protein belongs to the globin family. Heterotetramer of two alpha chains and two beta chains. In terms of tissue distribution, red blood cells.

In terms of biological role, involved in oxygen transport from the lung to the various peripheral tissues. This is Hemoglobin subunit beta (HBB) from Leptonychotes weddellii (Weddell seal).